Reading from the N-terminus, the 730-residue chain is Catalase-peroxidase 1 (730 aa).

Residues 92-217 (WHSAGTYRTT…LGAAVMGLIY (126 aa)) constitute a cross-link (tryptophyl-tyrosyl-methioninium (Trp-Tyr) (with M-243)). Residue His-93 is the Proton acceptor of the active site. Residues 217 to 243 (YVDPEGPNGNPDPLASAENIRESFGRM) constitute a cross-link (tryptophyl-tyrosyl-methioninium (Tyr-Met) (with W-92)). A heme b-binding site is contributed by His-258.

It belongs to the peroxidase family. Peroxidase/catalase subfamily. Homodimer or homotetramer. It depends on heme b as a cofactor. Post-translationally, formation of the three residue Trp-Tyr-Met cross-link is important for the catalase, but not the peroxidase activity of the enzyme.

The enzyme catalyses H2O2 + AH2 = A + 2 H2O. It catalyses the reaction 2 H2O2 = O2 + 2 H2O. Functionally, bifunctional enzyme with both catalase and broad-spectrum peroxidase activity. The protein is Catalase-peroxidase 1 of Haloarcula marismortui (strain ATCC 43049 / DSM 3752 / JCM 8966 / VKM B-1809) (Halobacterium marismortui).